A 1911-amino-acid polypeptide reads, in one-letter code: Adenylate kinase 9 (1911 aa).

An adenylate kinase 1 region spans residues 31 to 285; that stretch reads VCFVVFGKPG…LFMIVMDRLK (255 aa). 40–45 lines the ATP pocket; that stretch reads GVGKTT. The tract at residues 60–89 is NMP 1; it reads EALPILEEQIAAETESGVMLQSMLISGQSI. Residues 87–89 and 116–119 contribute to the AMP site; these read QSI and EIPS. Residues 160–205 form an LID 1 region; that stretch reads GQRQHNNTGYIYSRDQWDPEVIENHRKKKKEAQKDGKGEEEEEEEE. The segment at 185–210 is disordered; it reads RKKKKEAQKDGKGEEEEEEEEQEEEE. Acidic residues predominate over residues 197–210; sequence GEEEEEEEEQEEEE. Arg-229 is an AMP binding site. Coiled-coil stretches lie at residues 443 to 485 and 676 to 711; these read AEAT…EFGV and LQKKSEIDSKILERLLEELQKKKKEEEEARKATEEE. Disordered stretches follow at residues 728 to 796 and 892 to 926; these read KAKE…TEIP and DYEEETEDYQTEAEVDEELEEEEEEEGEDKMKERK. Residues 733-750 are compositionally biased toward acidic residues; it reads EETDNEDEEEIEGDELEV. Positions 751–761 are enriched in basic and acidic residues; the sequence is HEEPEASHDTR. Composition is skewed to acidic residues over residues 767 to 791 and 892 to 919; these read EEFEASEVPETEPEAVSEPIEETTV and DYEEETEDYQTEAEVDEELEEEEEEEGE. Adenylate kinase stretches follow at residues 992–1203 and 1412–1601; these read LRIC…ELIL and IRII…KNVQ. Residue 1001-1006 coordinates ATP; sequence GSGKTM. Residues 1021–1052 form an NMP 2 region; sequence QFEEVLQEKLLLKTEKKVGPEFEEDSENEQAA. AMP-binding positions include 1050 to 1052 and 1079 to 1082; these read QAA and VQLT. Residues 1124–1144 are LID 2; sequence DGFPRYPEEAQFLGDRGFFPD. ATP is bound at residue 1421–1426; it reads KSGKTT. Residues 1441–1472 form an NMP 3 region; it reads SIGGALRYVLNNHPETELALMLNWHLHKGMTA. Residues Arg-1447, 1470–1472, 1499–1502, Gln-1506, and Arg-1543 contribute to the AMP site; these read MTA and GYPV. The tract at residues 1536 to 1550 is LID 3; sequence LEKENEQRLPYPLHN.

It belongs to the adenylate kinase family.

Its subcellular location is the cytoplasm. The protein localises to the nucleus. It localises to the cell projection. The protein resides in the cilium. It is found in the flagellum. It carries out the reaction a ribonucleoside 5'-phosphate + ATP = a ribonucleoside 5'-diphosphate + ADP. The enzyme catalyses AMP + ATP = 2 ADP. The catalysed reaction is GTP + AMP = GDP + ADP. It catalyses the reaction CMP + ATP = CDP + ADP. It carries out the reaction GTP + CMP = CDP + GDP. The enzyme catalyses dAMP + ATP = dADP + ADP. The catalysed reaction is dCMP + ATP = dCDP + ADP. It catalyses the reaction a ribonucleoside 5'-diphosphate + ATP = a ribonucleoside 5'-triphosphate + ADP. It carries out the reaction CDP + ATP = CTP + ADP. The enzyme catalyses CDP + GTP = CTP + GDP. The catalysed reaction is GDP + ATP = GTP + ADP. It catalyses the reaction UDP + ATP = UTP + ADP. It carries out the reaction GTP + UDP = UTP + GDP. The enzyme catalyses dTDP + GTP = dTTP + GDP. The catalysed reaction is dCDP + ATP = dCTP + ADP. It catalyses the reaction dCDP + GTP = dCTP + GDP. It carries out the reaction dGDP + ATP = dGTP + ADP. The enzyme catalyses dTDP + ATP = dTTP + ADP. The catalysed reaction is dADP + GTP = dATP + GDP. Functionally, broad-specificity nucleoside phosphate kinase involved in cellular nucleotide homeostasis by catalyzing nucleoside-phosphate interconversions. Similar to other adenylate kinases, preferentially catalyzes the phosphorylation of the nucleoside monophosphate AMP with ATP as phosphate donor to produce ADP. In vitro, can also catalyze the phosphorylation of CMP, dAMP and dCMP and use GTP as an alternate phosphate donor. Moreover, exhibits a diphosphate kinase activity, producing ATP, CTP, GTP, UTP, TTP, dATP, dCTP and dGTP from the corresponding diphosphate substrates with either ATP or GTP as phosphate donors. For this activity shows the following substrate preference CDP &gt; UDP &gt; ADP &gt; TDP. The chain is Adenylate kinase 9 from Homo sapiens (Human).